Here is a 225-residue protein sequence, read N- to C-terminus: Putative N-acetylmannosamine-6-phosphate 2-epimerase (225 aa).

Belongs to the NanE family.

The catalysed reaction is an N-acyl-D-glucosamine 6-phosphate = an N-acyl-D-mannosamine 6-phosphate. It participates in amino-sugar metabolism; N-acetylneuraminate degradation; D-fructose 6-phosphate from N-acetylneuraminate: step 3/5. In terms of biological role, converts N-acetylmannosamine-6-phosphate (ManNAc-6-P) to N-acetylglucosamine-6-phosphate (GlcNAc-6-P). The chain is Putative N-acetylmannosamine-6-phosphate 2-epimerase from Vibrio vulnificus (strain CMCP6).